A 494-amino-acid chain; its full sequence is Glycerol kinase (494 aa).

An ADP-binding site is contributed by Thr12. Positions 12, 13, and 14 each coordinate ATP. Thr12 lines the sn-glycerol 3-phosphate pocket. Arg16 contacts ADP. 4 residues coordinate sn-glycerol 3-phosphate: Arg82, Glu83, Tyr134, and Asp243. 5 residues coordinate glycerol: Arg82, Glu83, Tyr134, Asp243, and Gln244. 2 residues coordinate ADP: Thr265 and Gly308. Thr265, Gly308, Gln312, and Gly408 together coordinate ATP. Residues Gly408 and Asn412 each contribute to the ADP site.

The protein belongs to the FGGY kinase family.

It carries out the reaction glycerol + ATP = sn-glycerol 3-phosphate + ADP + H(+). Its pathway is polyol metabolism; glycerol degradation via glycerol kinase pathway; sn-glycerol 3-phosphate from glycerol: step 1/1. Its activity is regulated as follows. Inhibited by fructose 1,6-bisphosphate (FBP). Key enzyme in the regulation of glycerol uptake and metabolism. Catalyzes the phosphorylation of glycerol to yield sn-glycerol 3-phosphate. This chain is Glycerol kinase, found in Marinomonas sp. (strain MWYL1).